We begin with the raw amino-acid sequence, 399 residues long: CCA-adding enzyme (399 aa).

ATP is bound by residues Gly-28 and Arg-31. Gly-28 and Arg-31 together coordinate CTP. Mg(2+)-binding residues include Asp-41 and Asp-43. The ATP site is built by Arg-112, Asp-155, Arg-158, Arg-161, and Arg-164. Residues Arg-112, Asp-155, Arg-158, Arg-161, and Arg-164 each coordinate CTP.

Belongs to the tRNA nucleotidyltransferase/poly(A) polymerase family. Bacterial CCA-adding enzyme type 3 subfamily. As to quaternary structure, homodimer. It depends on Mg(2+) as a cofactor.

The catalysed reaction is a tRNA precursor + 2 CTP + ATP = a tRNA with a 3' CCA end + 3 diphosphate. It carries out the reaction a tRNA with a 3' CCA end + 2 CTP + ATP = a tRNA with a 3' CCACCA end + 3 diphosphate. Functionally, catalyzes the addition and repair of the essential 3'-terminal CCA sequence in tRNAs without using a nucleic acid template. Adds these three nucleotides in the order of C, C, and A to the tRNA nucleotide-73, using CTP and ATP as substrates and producing inorganic pyrophosphate. tRNA 3'-terminal CCA addition is required both for tRNA processing and repair. Also involved in tRNA surveillance by mediating tandem CCA addition to generate a CCACCA at the 3' terminus of unstable tRNAs. While stable tRNAs receive only 3'-terminal CCA, unstable tRNAs are marked with CCACCA and rapidly degraded. This Staphylococcus saprophyticus subsp. saprophyticus (strain ATCC 15305 / DSM 20229 / NCIMB 8711 / NCTC 7292 / S-41) protein is CCA-adding enzyme.